We begin with the raw amino-acid sequence, 314 residues long: 3'-5' exoribonuclease YhaM (314 aa).

Residues 22 to 90 (SSTKGIASNG…QLKLRNIRPV (69 aa)) constitute a DNA-binding region (OB). Positions 163 to 279 (HVVSMLNLAK…LHYIDNLDAK (117 aa)) constitute an HD domain.

This sequence belongs to the YhaM family. The cofactor is Mn(2+). Co(2+) is required as a cofactor.

Shows a 3'-5' exoribonuclease activity as well as single-stranded DNA 3'-5'exonuclease activity. Plays a role in the secondary pathway of 23S rRNA 3' end maturation. This chain is 3'-5' exoribonuclease YhaM, found in Bacillus subtilis (strain 168).